We begin with the raw amino-acid sequence, 3993 residues long: Intermembrane lipid transfer protein VPS13B (3993 aa).

Residues 2-102 enclose the Chorein N-terminal domain; sequence LESYVTPILM…KDGIQDDHES (101 aa). The tract at residues 100 to 133 is disordered; sequence HESCGSNSTNRSTAENTKSSIKPRRIQQAAPADP. Residues 103–119 are compositionally biased toward polar residues; the sequence is CGSNSTNRSTAENTKSS. Phosphoserine is present on residues Ser413, Ser998, Ser1001, and Ser1032. Disordered stretches follow at residues 1262-1303, 1616-1637, and 1735-1770; these read SPVW…PFSD, DQLK…ERNS, and TKAT…DSGI. Positions 1264-1291 are enriched in polar residues; that stretch reads VWSSVGTAPPDTSTCSPSADIGTTTEGD. Positions 1739-1750 are enriched in basic and acidic residues; it reads EISKQEQKKVDT. Residues 1756 to 1770 show a composition bias toward polar residues; sequence AETSSRYSGAQDSGI. Ser1789 bears the Phosphoserine mark. The tract at residues 2048–2067 is disordered; it reads HSSAHSKETSTPSDSILNMD. The 80-residue stretch at 2604-2683 folds into the SHR-BD domain; sequence HFVICNDTQE…TIQYKGRTAS (80 aa). Positions 3880–3993 are localizes the protein to the Golgi apparatus; it reads AFPITEISCA…KNKALRKGFS (114 aa).

The protein belongs to the VPS13 family. Interacts with STX6. Interacts with STX12 (via N-terminus). Interacts with RAB6A isoform 1 (GTP-bound) and isoform 2 (GTP-bound). Interacts with RAB6B (GTP-bound). In terms of tissue distribution, ubiquitously expressed in all examined tissues.

The protein resides in the recycling endosome membrane. It localises to the cytoplasmic vesicle. It is found in the secretory vesicle. Its subcellular location is the acrosome membrane. The protein localises to the golgi apparatus. The protein resides in the cis-Golgi network membrane. It localises to the endoplasmic reticulum-Golgi intermediate compartment membrane. It is found in the trans-Golgi network membrane. Its subcellular location is the early endosome membrane. The protein localises to the lysosome membrane. Functionally, mediates the transfer of lipids between membranes at organelle contact sites. Binds phosphatidylinositol 3-phosphate. Functions as a tethering factor in the slow endocytic recycling pathway, to assist traffic between early and recycling endosomes. Involved in the transport of proacrosomal vesicles to the nuclear dense lamina (NDL) during spermatid development. Plays a role in the assembly of the Golgi apparatus, possibly by mediating trafficking to the Golgi membrane. Plays a role in the development of the nervous system, and may be required for neuron projection development. May also play a role during adipose tissue development. Required for maintenance of the ocular lens. Required for proper organization of the Golgi. The sequence is that of Intermembrane lipid transfer protein VPS13B from Mus musculus (Mouse).